Consider the following 305-residue polypeptide: tRNA pseudouridine synthase B (305 aa).

The active-site Nucleophile is D48.

It belongs to the pseudouridine synthase TruB family. Type 1 subfamily.

The catalysed reaction is uridine(55) in tRNA = pseudouridine(55) in tRNA. Its function is as follows. Responsible for synthesis of pseudouridine from uracil-55 in the psi GC loop of transfer RNAs. The sequence is that of tRNA pseudouridine synthase B from Mannheimia succiniciproducens (strain KCTC 0769BP / MBEL55E).